The sequence spans 273 residues: Dermonecrotic toxin LdSicTox-alphaIB3aiii (273 aa).

His5 is an active-site residue. The Mg(2+) site is built by Glu25 and Asp27. His41 serves as the catalytic Nucleophile. 2 cysteine pairs are disulfide-bonded: Cys45–Cys51 and Cys47–Cys190. Asp85 contacts Mg(2+).

Belongs to the arthropod phospholipase D family. Class II subfamily. The cofactor is Mg(2+). As to expression, expressed by the venom gland.

Its subcellular location is the secreted. The enzyme catalyses an N-(acyl)-sphingosylphosphocholine = an N-(acyl)-sphingosyl-1,3-cyclic phosphate + choline. It catalyses the reaction an N-(acyl)-sphingosylphosphoethanolamine = an N-(acyl)-sphingosyl-1,3-cyclic phosphate + ethanolamine. The catalysed reaction is a 1-acyl-sn-glycero-3-phosphocholine = a 1-acyl-sn-glycero-2,3-cyclic phosphate + choline. It carries out the reaction a 1-acyl-sn-glycero-3-phosphoethanolamine = a 1-acyl-sn-glycero-2,3-cyclic phosphate + ethanolamine. In terms of biological role, dermonecrotic toxins cleave the phosphodiester linkage between the phosphate and headgroup of certain phospholipids (sphingolipid and lysolipid substrates), forming an alcohol (often choline) and a cyclic phosphate. This toxin acts on sphingomyelin (SM). It may also act on ceramide phosphoethanolamine (CPE), lysophosphatidylcholine (LPC) and lysophosphatidylethanolamine (LPE), but not on lysophosphatidylserine (LPS), and lysophosphatidylglycerol (LPG). It acts by transphosphatidylation, releasing exclusively cyclic phosphate products as second products. Induces dermonecrosis, hemolysis, increased vascular permeability, edema, inflammatory response, and platelet aggregation. The polypeptide is Dermonecrotic toxin LdSicTox-alphaIB3aiii (Loxosceles deserta (Desert recluse spider)).